A 533-amino-acid chain; its full sequence is CTP synthase (533 aa).

Residues 1–264 are amidoligase domain; the sequence is MKYIFVTGGV…GKLVTEKLNL (264 aa). S12 contacts CTP. Residue S12 participates in UTP binding. ATP-binding positions include 13-18 and D70; that span reads SLGKGI. The Mg(2+) site is built by D70 and E138. CTP-binding positions include 145–147, 185–190, and K221; these read DIE and KTKPTQ. UTP contacts are provided by residues 185–190 and K221; that span reads KTKPTQ. An ATP-binding site is contributed by 237 to 239; it reads KDA. The region spanning 289 to 533 is the Glutamine amidotransferase type-1 domain; the sequence is TIGIVGKYIE…HGLVKASIEK (245 aa). G357 is a binding site for L-glutamine. Residue C384 is the Nucleophile; for glutamine hydrolysis of the active site. Residues 385-388, E407, and R464 contribute to the L-glutamine site; that span reads LGMQ. Residues H509 and E511 contribute to the active site.

It belongs to the CTP synthase family. As to quaternary structure, homotetramer.

The catalysed reaction is UTP + L-glutamine + ATP + H2O = CTP + L-glutamate + ADP + phosphate + 2 H(+). It carries out the reaction L-glutamine + H2O = L-glutamate + NH4(+). It catalyses the reaction UTP + NH4(+) + ATP = CTP + ADP + phosphate + 2 H(+). The protein operates within pyrimidine metabolism; CTP biosynthesis via de novo pathway; CTP from UDP: step 2/2. With respect to regulation, allosterically activated by GTP, when glutamine is the substrate; GTP has no effect on the reaction when ammonia is the substrate. The allosteric effector GTP functions by stabilizing the protein conformation that binds the tetrahedral intermediate(s) formed during glutamine hydrolysis. Inhibited by the product CTP, via allosteric rather than competitive inhibition. Functionally, catalyzes the ATP-dependent amination of UTP to CTP with either L-glutamine or ammonia as the source of nitrogen. Regulates intracellular CTP levels through interactions with the four ribonucleotide triphosphates. This chain is CTP synthase, found in Methanococcus maripaludis (strain DSM 14266 / JCM 13030 / NBRC 101832 / S2 / LL).